The sequence spans 71 residues: Large ribosomal subunit protein bL31 (71 aa).

Zn(2+) contacts are provided by cysteine 16, cysteine 18, cysteine 38, and cysteine 41.

Belongs to the bacterial ribosomal protein bL31 family. Type A subfamily. In terms of assembly, part of the 50S ribosomal subunit. The cofactor is Zn(2+).

Binds the 23S rRNA. This chain is Large ribosomal subunit protein bL31, found in Laribacter hongkongensis (strain HLHK9).